The chain runs to 733 residues: Non-secreted LysM effector LCP1 (733 aa).

The first 22 residues, 1 to 22 (MMRRPWLLSALVAWVKLPSVQG), serve as a signal peptide directing secretion. LysM domains lie at 211-256 (SEYT…KLCI) and 261-309 (DVYV…TICI). 9 N-linked (GlcNAc...) asparagine glycosylation sites follow: Asn-298, Asn-304, Asn-340, Asn-350, Asn-381, Asn-432, Asn-442, Asn-455, and Asn-538. Residues 347 to 393 (LFHNVTAGDDCGTIGLKYSISLDDFIFLNSMIWPNCTNLWLRASYCV) form the LysM 3 domain. The span at 605 to 629 (SPITSSAPTSTTASSKTSSSAAQPT) shows a compositional bias: low complexity. Residues 605–637 (SPITSSAPTSTTASSKTSSSAAQPTNVSTDGTC) are disordered. A glycan (N-linked (GlcNAc...) asparagine) is linked at Asn-630. 2 Chitin-binding type-1 domains span residues 634–680 (DGTC…KCDA) and 688–733 (DGTC…GVCT). Disulfide bonds link Cys-637–Cys-654, Cys-645–Cys-660, Cys-653–Cys-667, Cys-671–Cys-678, Cys-691–Cys-708, Cys-699–Cys-714, Cys-707–Cys-721, and Cys-725–Cys-732.

It belongs to the secreted LysM effector family.

Its subcellular location is the secreted. The protein resides in the cell membrane. The protein localises to the vacuole. Functionally, secreted effector that enables the plant pathogenic fungus to manipulate host defenses for successful infection. Not involved in host recognition and penetration but suppresses host cell death and promotes fumonisin biosynthesis while the pathogen colonizes maize kernels. The protein is Non-secreted LysM effector LCP1 of Gibberella moniliformis (strain M3125 / FGSC 7600) (Maize ear and stalk rot fungus).